The sequence spans 803 residues: Volume-regulated anion channel subunit LRRC8C (803 aa).

At 1-22 the chain is on the cytoplasmic side; it reads MIPVTEFRQFSEQQPAFRVLKP. Residues 23–47 form a helical membrane-spanning segment; that stretch reads WWDVFTDYLSVAMLMIGVFGCTLQV. The Extracellular portion of the chain corresponds to 48 to 124; the sequence is MQDKIICLPK…CYERALHWYA (77 aa). Intrachain disulfides connect C54–C308 and C115–C293. N64 and N70 each carry an N-linked (GlcNAc...) asparagine glycan. A helical membrane pass occupies residues 125-144; it reads KYFPYLVLIHTLVFMLCSNF. Residues 145–262 are Cytoplasmic-facing; it reads WFKFPGSSSK…EEGDILYAMY (118 aa). The segment at 177 to 209 is disordered; it reads EVSGEDSEEKDNRKNNMNRSNTIQSGPEDSLVN. Over residues 191-209 the composition is skewed to polar residues; it reads NNMNRSNTIQSGPEDSLVN. Residues S212 and S215 each carry the phosphoserine modification. The helical transmembrane segment at 263–284 threads the bilayer; sequence VRQTVLKVIKFLIIIAYNSALV. Topologically, residues 285-314 are extracellular; it reads SKVQFTVDCNVDIQDMTGYKNFSCNHTMAH. A helical transmembrane segment spans residues 315-339; the sequence is LFSKLSFCYLCFVSIYGLTCLYTLY. Residues 340–803 are Cytoplasmic-facing; that stretch reads WLFYRSLREY…SDVREQMKTE (464 aa). LRR repeat units follow at residues 397 to 420, 421 to 443, 446 to 466, 467 to 488, 490 to 513, 515 to 537, 541 to 563, 565 to 587, 588 to 611, 613 to 635, 636 to 659, 660 to 682, 684 to 705, 706 to 728, 730 to 751, 753 to 774, and 776 to 799; these read ENKLKQLNLNNEWTPDKLRQKLQT, NAHNRLELPLIMLSGLPDTVFEI, LQSLKLEIIKNVMIPATIAQL, DNLQELSLHQCSVKIHSAALSF, KENLKVLSVKFDDMRELPPWMYGL, NLEELYLVGSLSHDISRNVTLES, LKSLKILSIKSNVSKIPQAVVDV, SHLQKMCIHNDGTKLVMLNNLKK, MTNLTELELVHCDLERIPHAVFSL, SLQELDLKENNLKSIEEIVSFQH, LRKLTVLKLWHNSITYIPEHIKKL, TSLERLSFSHNKIEVLPSHLFLC, KIRYLDLSYNDIRFIPPEIGVL, QSLQYFSITCNKVESLPDELYFC, KLKTLKIGKNSLSVLSPKIGNL, FLSYLDVKGNHFEILPPELGDC, and ALKRAGLVVEDALFETLPSDVREQ.

This sequence belongs to the LRRC8 family. In terms of assembly, heterohexamer; oligomerizes with other LRRC8 proteins (LRRC8A, LRRC8B, LRRC8D and/or LRRC8E) to form a heterohexamer. Homoheptamer; inactive, likely because it is not targeted to the plasma membrane in the absence of LRRC8A. In vivo, the subunit composition may depend primarily on expression levels, and heterooligomeric channels containing various proportions of the different LRRC8 proteins may coexist. In terms of tissue distribution, expressed at highest levels in skeletal muscle, and at moderate levels in heart, lung and peripheral blood leukocytes.

It is found in the cell membrane. It localises to the endoplasmic reticulum membrane. The enzyme catalyses chloride(in) = chloride(out). It catalyses the reaction iodide(out) = iodide(in). It carries out the reaction taurine(out) = taurine(in). The catalysed reaction is 2',3'-cGAMP(out) = 2',3'-cGAMP(in). Its function is as follows. Non-essential component of the volume-regulated anion channel (VRAC, also named VSOAC channel), an anion channel required to maintain a constant cell volume in response to extracellular or intracellular osmotic changes. The VRAC channel conducts iodide better than chloride and can also conduct organic osmolytes like taurine. Plays a redundant role in the efflux of amino acids, such as aspartate and glutamate, in response to osmotic stress. The VRAC channel also mediates transport of immunoreactive cyclic dinucleotide GMP-AMP (2'-3'-cGAMP), an immune messenger produced in response to DNA virus in the cytosol. Channel activity requires LRRC8A plus at least one other family member (LRRC8B, LRRC8C, LRRC8D or LRRC8E); channel characteristics depend on the precise subunit composition. The protein is Volume-regulated anion channel subunit LRRC8C of Homo sapiens (Human).